A 71-amino-acid chain; its full sequence is Beta-defensin 25 (71 aa).

Residues 1–22 (MAKWILLIVALLVLGHVPSGST) form the signal peptide. 3 disulfide bridges follow: C27/C54, C34/C48, and C38/C55.

It belongs to the beta-defensin family.

It is found in the secreted. Its function is as follows. Has antibacterial activity. This is Beta-defensin 25 (Defb25) from Rattus norvegicus (Rat).